Reading from the N-terminus, the 658-residue chain is Serine/threonine-protein kinase shk1/pak1 (658 aa).

Disordered regions lie at residues 1-21 (MERG…ITPI), 39-104 (RKLK…SYDE), 126-147 (GGSS…STVI), and 213-365 (GAKP…QQSN). Residues 66 to 98 (PLSQSRTTVSRVSLGSRQHSSSSIRKLQTNVSD) show a composition bias toward polar residues. Residues 129-140 (SPTSSYGSGSAS) show a composition bias toward low complexity. In terms of domain architecture, CRIB spans 147–160 (ISSPFDPKHVTHVG). Composition is skewed to low complexity over residues 226–254 (PLLS…LYPS) and 262–272 (ASSSSSPLLSS). Positions 273–300 (QTVKTTTSNASRQPSPLVSSKSTDNIIR) are enriched in polar residues. Residues serine 301 and serine 303 each carry the phosphoserine modification. In terms of domain architecture, Protein kinase spans 386–637 (YRNFVKIGQG…SGELLRHPFL (252 aa)). ATP contacts are provided by residues 392 to 400 (IGQGASGDV) and lysine 415. The Proton acceptor role is filled by aspartate 505.

It belongs to the protein kinase superfamily. STE Ser/Thr protein kinase family. STE20 subfamily. As to quaternary structure, forms an activated complex with GTP-bound ras-like cdc42. Interacts with skb1 and the SH3 domain of skb5 via its amino-terminal regulatory domain. Skb1, cdc42 and shk1 are able to form a ternary complex in vivo. Interacts with rga8 and may interact with byr2. Post-translationally, autophosphorylated on serine residues.

Its subcellular location is the cytoplasm. It localises to the cytoskeleton. It is found in the spindle. The enzyme catalyses L-seryl-[protein] + ATP = O-phospho-L-seryl-[protein] + ADP + H(+). It catalyses the reaction L-threonyl-[protein] + ATP = O-phospho-L-threonyl-[protein] + ADP + H(+). MAP4K component of the MAPK pathway required for the mating pheromone response. Phosphorylates histone H2B to form H2BS10ph. Phosphorylates tea1. Required for skb1-dependent mitotic inhibitory function. Regulates microtubule dynamics and cell polarity. The polypeptide is Serine/threonine-protein kinase shk1/pak1 (shk1) (Schizosaccharomyces pombe (strain 972 / ATCC 24843) (Fission yeast)).